The following is a 208-amino-acid chain: Urease accessory protein UreE (208 aa).

Residues 145–165 (EGGAYSAGGHGHTHAPAATPV) form a disordered region.

The protein belongs to the UreE family.

The protein resides in the cytoplasm. Functionally, involved in urease metallocenter assembly. Binds nickel. Probably functions as a nickel donor during metallocenter assembly. This Polaromonas naphthalenivorans (strain CJ2) protein is Urease accessory protein UreE.